We begin with the raw amino-acid sequence, 152 residues long: 3-hydroxyacyl-[acyl-carrier-protein] dehydratase FabZ (152 aa).

The active site involves H58.

It belongs to the thioester dehydratase family. FabZ subfamily.

It is found in the cytoplasm. The enzyme catalyses a (3R)-hydroxyacyl-[ACP] = a (2E)-enoyl-[ACP] + H2O. Functionally, involved in unsaturated fatty acids biosynthesis. Catalyzes the dehydration of short chain beta-hydroxyacyl-ACPs and long chain saturated and unsaturated beta-hydroxyacyl-ACPs. In Synechococcus sp. (strain RCC307), this protein is 3-hydroxyacyl-[acyl-carrier-protein] dehydratase FabZ.